Reading from the N-terminus, the 341-residue chain is Serine/threonine-protein kinase PDIK1L (341 aa).

Residues 8–334 enclose the Protein kinase domain; that stretch reads YDLIREVGRG…LELRLVQIAF (327 aa). Residues 14 to 22 and lysine 37 contribute to the ATP site; that span reads VGRGSYGVV. The active-site Proton acceptor is the aspartate 164.

It belongs to the protein kinase superfamily. Ser/Thr protein kinase family.

It is found in the nucleus. It carries out the reaction L-seryl-[protein] + ATP = O-phospho-L-seryl-[protein] + ADP + H(+). It catalyses the reaction L-threonyl-[protein] + ATP = O-phospho-L-threonyl-[protein] + ADP + H(+). The sequence is that of Serine/threonine-protein kinase PDIK1L (Pdik1l) from Mus musculus (Mouse).